The following is a 432-amino-acid chain: ATP-dependent RNA helicase RhlB (432 aa).

A Q motif motif is present at residues 9–37; it reads KKFSDFALHPKVIEALEKKGFSNCTQIQA. Residues 40–219 form the Helicase ATP-binding domain; it reads LPITVKGHDI…FEQMNNPEYV (180 aa). 53–60 contacts ATP; the sequence is AQTGTGKT. A DEAD box motif is present at residues 165-168; the sequence is DEAD. The Helicase C-terminal domain occupies 245–390; sequence RLLQTLIEEE…VSKYNSDALL (146 aa). Residues 393 to 432 are disordered; sequence LPEPKRRHRPRQGQPRRNNSAPRRGNNTQRNNRNKRPSHS. Residues 404 to 423 show a composition bias toward low complexity; that stretch reads QGQPRRNNSAPRRGNNTQRN.

The protein belongs to the DEAD box helicase family. RhlB subfamily. In terms of assembly, component of the RNA degradosome, which is a multiprotein complex involved in RNA processing and mRNA degradation.

Its subcellular location is the cytoplasm. The enzyme catalyses ATP + H2O = ADP + phosphate + H(+). DEAD-box RNA helicase involved in RNA degradation. Has RNA-dependent ATPase activity and unwinds double-stranded RNA. The chain is ATP-dependent RNA helicase RhlB from Proteus mirabilis (strain HI4320).